The following is a 545-amino-acid chain: Lysine--tRNA ligase (545 aa).

Positions Val-33–Arg-41 match the 'HIGH' region motif. A 'KMSKS' region motif is present at residues Asp-288–Ser-292.

The protein belongs to the class-I aminoacyl-tRNA synthetase family.

The protein resides in the cytoplasm. It carries out the reaction tRNA(Lys) + L-lysine + ATP = L-lysyl-tRNA(Lys) + AMP + diphosphate. The chain is Lysine--tRNA ligase (lysS) from Aeropyrum pernix (strain ATCC 700893 / DSM 11879 / JCM 9820 / NBRC 100138 / K1).